The following is a 101-amino-acid chain: A-type ATP synthase subunit K (101 aa).

Transmembrane regions (helical) follow at residues 4–24, 32–52, and 75–95; these read ALLI…AAQA, FMGI…GAGV, and VLIF…FAVL.

Belongs to the V-ATPase proteolipid subunit family. As to quaternary structure, has multiple subunits with at least A(3), B(3), C, D, E, F, H, I and proteolipid K(x).

It is found in the cell membrane. Its function is as follows. Component of the A-type ATP synthase that produces ATP from ADP in the presence of a proton gradient across the membrane. The polypeptide is A-type ATP synthase subunit K (Sulfolobus acidocaldarius (strain ATCC 33909 / DSM 639 / JCM 8929 / NBRC 15157 / NCIMB 11770)).